The following is a 517-amino-acid chain: ADP-ribosylation factor GTPase-activating protein 3 (517 aa).

In terms of domain architecture, Arf-GAP spans 10–126 (LTIFKRLRSV…IKALASQATR (117 aa)). The C4-type zinc finger occupies 25 to 48 (CFDCGAKNPSWASITYGVFLCIDC). The tract at residues 139 to 200 (VPPSSPPPKE…EQGPSVEGLN (62 aa)) is disordered. The segment covering 159–176 (EVSSTGWASAQPEPSLTP) has biased composition (polar residues). The residue at position 231 (Ser-231) is a Phosphoserine. The stretch at 243 to 263 (NEIEKQAQAVDKMNAQEDLLS) forms a coiled coil. Ser-271 and Ser-275 each carry phosphoserine. Residues 291–305 (EKMNMSGKKKAESER) are compositionally biased toward basic and acidic residues. Disordered regions lie at residues 291-349 (EKMN…SDDS) and 362-422 (MELR…QKKF). Polar residues predominate over residues 312-333 (NSRSGISHSVTSDMQTIEQETP). At Ser-371 the chain carries Phosphoserine. A compositionally biased stretch (basic and acidic residues) spans 379 to 390 (YWKKETIKDTDP). Residues Ser-429, Ser-452, Ser-454, Ser-456, Ser-458, and Ser-459 each carry the phosphoserine modification.

The protein resides in the cytoplasm. Its subcellular location is the golgi apparatus membrane. Its activity is regulated as follows. GAP activity stimulated by phosphatidylinositol 4,5-bisphosphate (PIP2). GTPase-activating protein (GAP) for ADP ribosylation factor 1 (ARF1). Hydrolysis of ARF1-bound GTP may lead to dissociation of coatomer from Golgi-derived membranes to allow fusion with target membranes. The polypeptide is ADP-ribosylation factor GTPase-activating protein 3 (Bos taurus (Bovine)).